The chain runs to 334 residues: FAD:protein FMN transferase (334 aa).

The first 16 residues, 1-16 (MRNWLVALASLLLLAG), serve as a signal peptide directing secretion. Cys17 carries N-palmitoyl cysteine lipidation. The S-diacylglycerol cysteine moiety is linked to residue Cys17. Residues Met31, Tyr69, 110–112 (ALD), and Asp168 each bind FAD. A Mg(2+)-binding site is contributed by Thr171. Residues Lys174 and Ile259 each contribute to the FAD site. Mg(2+) is bound by residues Asp285 and Thr289.

This sequence belongs to the ApbE family. The cofactor is Mg(2+).

It is found in the cell inner membrane. It catalyses the reaction L-threonyl-[protein] + FAD = FMN-L-threonyl-[protein] + AMP + H(+). In terms of biological role, flavin transferase that catalyzes the transfer of the FMN moiety of FAD and its covalent binding to the hydroxyl group of a threonine residue in a target flavoprotein such as NqrB and NqrC, two subunits of the NQR complex. Cannot use directly FMN instead of FAD as substrate. In Vibrio cholerae serotype O1 (strain ATCC 39541 / Classical Ogawa 395 / O395), this protein is FAD:protein FMN transferase.